The following is a 274-amino-acid chain: 3-deoxy-manno-octulosonate cytidylyltransferase (274 aa).

The protein belongs to the KdsB family.

Its subcellular location is the cytoplasm. The enzyme catalyses 3-deoxy-alpha-D-manno-oct-2-ulosonate + CTP = CMP-3-deoxy-beta-D-manno-octulosonate + diphosphate. The protein operates within nucleotide-sugar biosynthesis; CMP-3-deoxy-D-manno-octulosonate biosynthesis; CMP-3-deoxy-D-manno-octulosonate from 3-deoxy-D-manno-octulosonate and CTP: step 1/1. It participates in bacterial outer membrane biogenesis; lipopolysaccharide biosynthesis. Activates KDO (a required 8-carbon sugar) for incorporation into bacterial lipopolysaccharide in Gram-negative bacteria. The protein is 3-deoxy-manno-octulosonate cytidylyltransferase of Bordetella avium (strain 197N).